Reading from the N-terminus, the 719-residue chain is Lanosterol synthase (719 aa).

One copy of the PFTB 1 repeat lies at 118–160 (RIEVIRYLVNHANPEDGGWGIHIEGKSTVFGTALNYVVLRILG). Aspartate 451 (proton donor) is an active-site residue. PFTB repeat units lie at residues 478-523 (LKDS…MIEH), 555-595 (VKNA…SCVK), and 604-645 (SRRA…VVQT).

Belongs to the terpene cyclase/mutase family.

It catalyses the reaction (S)-2,3-epoxysqualene = lanosterol. The protein operates within terpene metabolism; lanosterol biosynthesis; lanosterol from farnesyl diphosphate: step 3/3. Functionally, catalyzes the cyclization of (S)-2,3 oxidosqualene to lanosterol, a reaction that forms the sterol nucleus. The chain is Lanosterol synthase (ERG7) from Pneumocystis carinii.